Consider the following 164-residue polypeptide: NADH-quinone oxidoreductase subunit I (164 aa).

4Fe-4S ferredoxin-type domains lie at 54-84 (LRRYPNGEERCIACKLCEAICPAQAITIEAG) and 95-124 (VRYDIDMVKCIYCGFCQEACPVDAIVEGPN). Residues Cys-64, Cys-67, Cys-70, Cys-74, Cys-104, Cys-107, Cys-110, and Cys-114 each coordinate [4Fe-4S] cluster.

Belongs to the complex I 23 kDa subunit family. In terms of assembly, NDH-1 is composed of 14 different subunits. Subunits NuoA, H, J, K, L, M, N constitute the membrane sector of the complex. Requires [4Fe-4S] cluster as cofactor.

It localises to the cell inner membrane. It carries out the reaction a quinone + NADH + 5 H(+)(in) = a quinol + NAD(+) + 4 H(+)(out). Functionally, NDH-1 shuttles electrons from NADH, via FMN and iron-sulfur (Fe-S) centers, to quinones in the respiratory chain. The immediate electron acceptor for the enzyme in this species is believed to be ubiquinone. Couples the redox reaction to proton translocation (for every two electrons transferred, four hydrogen ions are translocated across the cytoplasmic membrane), and thus conserves the redox energy in a proton gradient. The polypeptide is NADH-quinone oxidoreductase subunit I (Mesorhizobium japonicum (strain LMG 29417 / CECT 9101 / MAFF 303099) (Mesorhizobium loti (strain MAFF 303099))).